An 881-amino-acid chain; its full sequence is Valine--tRNA ligase (881 aa).

Positions 49-59 (PNVTGKLHLGH) match the 'HIGH' region motif. The 'KMSKS' region motif lies at 526 to 530 (KMSKS). Lys529 provides a ligand contact to ATP. Positions 810-881 (LADLINLDEE…VRQRLADLEK (72 aa)) form a coiled coil.

The protein belongs to the class-I aminoacyl-tRNA synthetase family. ValS type 1 subfamily. Monomer.

It is found in the cytoplasm. The enzyme catalyses tRNA(Val) + L-valine + ATP = L-valyl-tRNA(Val) + AMP + diphosphate. Its function is as follows. Catalyzes the attachment of valine to tRNA(Val). As ValRS can inadvertently accommodate and process structurally similar amino acids such as threonine, to avoid such errors, it has a 'posttransfer' editing activity that hydrolyzes mischarged Thr-tRNA(Val) in a tRNA-dependent manner. This Bacillus cereus (strain ATCC 14579 / DSM 31 / CCUG 7414 / JCM 2152 / NBRC 15305 / NCIMB 9373 / NCTC 2599 / NRRL B-3711) protein is Valine--tRNA ligase.